We begin with the raw amino-acid sequence, 340 residues long: NADPH dehydrogenase (340 aa).

Residue 23 to 26 participates in FMN binding; sequence SPMC. Tyr-28 is a binding site for substrate. FMN-binding residues include Ala-60 and Gln-102. A substrate-binding site is contributed by 164–167; the sequence is HGAH. FMN is bound by residues Arg-215 and 307-308; that span reads AR.

This sequence belongs to the NADH:flavin oxidoreductase/NADH oxidase family. NamA subfamily. As to quaternary structure, homotetramer. FMN serves as cofactor.

The catalysed reaction is A + NADPH + H(+) = AH2 + NADP(+). Its function is as follows. Catalyzes the reduction of the double bond of an array of alpha,beta-unsaturated aldehydes and ketones. It also reduces the nitro group of nitroester and nitroaromatic compounds. It could have a role in detoxification processes. The sequence is that of NADPH dehydrogenase from Geobacillus sp. (strain WCH70).